The following is a 223-amino-acid chain: MIF4G domain-containing protein B (223 aa).

The region spanning 9 to 206 (DYKIQGFDAD…LEMIEYRAAG (198 aa)) is the MIF4G domain.

Belongs to the MIF4GD family. Interacts with eif4g1, eif4g2 and slbp; probably tethered by SLBP to the 3'-end of mRNAs ending with the histone stem-loop, it also interacts with eif4g1 which is bound to their 5'-end.

It localises to the cytoplasm. The protein resides in the nucleus. Functionally, functions in replication-dependent translation of histone mRNAs which differ from other eukaryotic mRNAs in that they do not end with a poly-A tail but a stem-loop. May participate in circularizing those mRNAs specifically enhancing their translation. In Xenopus laevis (African clawed frog), this protein is MIF4G domain-containing protein B (mif4gd-b).